Reading from the N-terminus, the 139-residue chain is Mannose-specific lectin (139 aa).

A Bulb-type lectin domain is found at 1-109; that stretch reads DNILYSGETL…ARWATGTNIH (109 aa). Positions 26, 28, 30, 34, 37, 38, 41, 42, 44, 57, 59, 61, 65, 72, 73, 76, 83, 89, 91, 93, 97, and 102 each coordinate alpha-D-mannopyranose. C29 and C52 are disulfide-bonded.

Homotetramer; antiparallel. In terms of tissue distribution, detected in bulbs (at protein level).

The protein localises to the secreted. Mannose-specific lectin. Displays antiviral activity and therefore may contribute to defense against infections. Shows agglutinating activity towards rabbit erythrocytes. This chain is Mannose-specific lectin, found in Narcissus tazetta (Cream narcissus).